Reading from the N-terminus, the 167-residue chain is Disulfide bond formation protein B (167 aa).

Residues 1–12 lie on the Cytoplasmic side of the membrane; it reads MFLNLLDAPRRL. Residues 13 to 29 form a helical membrane-spanning segment; it reads LALVALGCVALLAFGLY. Topologically, residues 30 to 47 are periplasmic; it reads LQHVVGLEPCPMCIVQRY. C39 and C42 form a disulfide bridge. The helical transmembrane segment at 48–63 threads the bilayer; sequence ALVLVAIVAGLTAITS. Residues 64 to 69 are Cytoplasmic-facing; it reads NKKGLI. A helical transmembrane segment spans residues 70–87; the sequence is TGSGVLLLLAGFGAFVAA. Residues 88–143 lie on the Periplasmic side of the membrane; that stretch reads RQSFLQWYPPEVASCGRDFYGMIETFPLQRAIPMIFKGSGDCAKVDWTFLGGSIAN. A disulfide bond links C102 and C129. A helical membrane pass occupies residues 144-162; it reads WSFVCFAVIGLTALTLIAR. Residues 163–167 lie on the Cytoplasmic side of the membrane; sequence LARQR.

It belongs to the DsbB family.

Its subcellular location is the cell inner membrane. In terms of biological role, required for disulfide bond formation in some periplasmic proteins. Acts by oxidizing the DsbA protein. The polypeptide is Disulfide bond formation protein B (Polaromonas naphthalenivorans (strain CJ2)).